Reading from the N-terminus, the 461-residue chain is Probable protein phosphatase 2C 40 (461 aa).

Residues 34–63 are disordered; that stretch reads REASAERASASASAGAGGRERERRPSVAAG. Residues 57–321 enclose the PPM-type phosphatase domain; sequence RPSVAAGQAC…DDTTCIVIDI (265 aa). The Mn(2+) site is built by Asp-98, Gly-99, Asp-273, and Asp-312. Basic and acidic residues predominate over residues 439–453; sequence KKEAMEGKRHSRDSS. The disordered stretch occupies residues 439 to 461; the sequence is KKEAMEGKRHSRDSSSRNSGSSE.

The protein belongs to the PP2C family. Mg(2+) serves as cofactor. Mn(2+) is required as a cofactor. In terms of tissue distribution, expressed in leaves, leaf sheaths, panicles, nodes and internodes. Expressed at low levels in roots and stems.

Its subcellular location is the nucleus. The protein localises to the cytoplasm. The enzyme catalyses O-phospho-L-seryl-[protein] + H2O = L-seryl-[protein] + phosphate. The catalysed reaction is O-phospho-L-threonyl-[protein] + H2O = L-threonyl-[protein] + phosphate. Its function is as follows. Mediates the negative regulation of osmotic and salt stress tolerance through regulation of the jasmonate and abscisic acid signaling pathways and modulation of the raffinose family oligosaccharide metabolism pathway. In Oryza sativa subsp. japonica (Rice), this protein is Probable protein phosphatase 2C 40.